Reading from the N-terminus, the 440-residue chain is Methylthioribose-1-phosphate isomerase (440 aa).

Asp285 functions as the Proton donor in the catalytic mechanism.

Belongs to the eIF-2B alpha/beta/delta subunits family. MtnA subfamily.

Its subcellular location is the cytoplasm. It is found in the nucleus. It carries out the reaction 5-(methylsulfanyl)-alpha-D-ribose 1-phosphate = 5-(methylsulfanyl)-D-ribulose 1-phosphate. It participates in amino-acid biosynthesis; L-methionine biosynthesis via salvage pathway; L-methionine from S-methyl-5-thio-alpha-D-ribose 1-phosphate: step 1/6. In terms of biological role, catalyzes the interconversion of methylthioribose-1-phosphate (MTR-1-P) into methylthioribulose-1-phosphate (MTRu-1-P). The sequence is that of Methylthioribose-1-phosphate isomerase (mri1) from Botryotinia fuckeliana (strain B05.10) (Noble rot fungus).